We begin with the raw amino-acid sequence, 267 residues long: 5'-nucleotidase SurE (267 aa).

Residues aspartate 9, aspartate 10, serine 40, and asparagine 97 each contribute to the a divalent metal cation site.

It belongs to the SurE nucleotidase family. Requires a divalent metal cation as cofactor.

The protein localises to the cytoplasm. The catalysed reaction is a ribonucleoside 5'-phosphate + H2O = a ribonucleoside + phosphate. In terms of biological role, nucleotidase that shows phosphatase activity on nucleoside 5'-monophosphates. The sequence is that of 5'-nucleotidase SurE from Helicobacter pylori (strain HPAG1).